A 203-amino-acid chain; its full sequence is Thymidylate kinase (203 aa).

Residue 7–14 (GGEGAGKT) participates in ATP binding.

It belongs to the thymidylate kinase family.

It carries out the reaction dTMP + ATP = dTDP + ADP. In terms of biological role, phosphorylation of dTMP to form dTDP in both de novo and salvage pathways of dTTP synthesis. The polypeptide is Thymidylate kinase (tmk) (Chlamydia trachomatis serovar D (strain ATCC VR-885 / DSM 19411 / UW-3/Cx)).